The chain runs to 130 residues: Small ribosomal subunit protein uS11 (130 aa).

Belongs to the universal ribosomal protein uS11 family. As to quaternary structure, part of the 30S ribosomal subunit. Interacts with proteins S7 and S18. Binds to IF-3.

Located on the platform of the 30S subunit, it bridges several disparate RNA helices of the 16S rRNA. Forms part of the Shine-Dalgarno cleft in the 70S ribosome. In Borreliella afzelii (strain PKo) (Borrelia afzelii), this protein is Small ribosomal subunit protein uS11.